Reading from the N-terminus, the 503-residue chain is Probable cytosol aminopeptidase (503 aa).

The Mn(2+) site is built by Lys274 and Asp279. Lys286 is an active-site residue. Asp297, Asp356, and Glu358 together coordinate Mn(2+). Arg360 is a catalytic residue.

The protein belongs to the peptidase M17 family. The cofactor is Mn(2+).

The protein localises to the cytoplasm. It carries out the reaction Release of an N-terminal amino acid, Xaa-|-Yaa-, in which Xaa is preferably Leu, but may be other amino acids including Pro although not Arg or Lys, and Yaa may be Pro. Amino acid amides and methyl esters are also readily hydrolyzed, but rates on arylamides are exceedingly low.. The enzyme catalyses Release of an N-terminal amino acid, preferentially leucine, but not glutamic or aspartic acids.. Presumably involved in the processing and regular turnover of intracellular proteins. Catalyzes the removal of unsubstituted N-terminal amino acids from various peptides. The sequence is that of Probable cytosol aminopeptidase from Paraburkholderia phymatum (strain DSM 17167 / CIP 108236 / LMG 21445 / STM815) (Burkholderia phymatum).